The sequence spans 767 residues: Probable beta-D-xylosidase 7 (767 aa).

The N-terminal stretch at 1 to 19 is a signal peptide; sequence MAKQLLLLLLLFIVHGVES. N100 carries an N-linked (GlcNAc...) asparagine glycan. D292 is an active-site residue. A glycan (N-linked (GlcNAc...) asparagine) is linked at N643.

This sequence belongs to the glycosyl hydrolase 3 family.

The protein resides in the secreted. The protein localises to the extracellular space. It is found in the extracellular matrix. The protein is Probable beta-D-xylosidase 7 (BXL7) of Arabidopsis thaliana (Mouse-ear cress).